We begin with the raw amino-acid sequence, 278 residues long: DNA-directed RNA polymerase subunit alpha (278 aa).

This sequence belongs to the RNA polymerase alpha chain family. As to quaternary structure, in plastids the minimal PEP RNA polymerase catalytic core is composed of four subunits: alpha, beta, beta', and beta''. When a (nuclear-encoded) sigma factor is associated with the core the holoenzyme is formed, which can initiate transcription.

It localises to the plastid. The protein localises to the chloroplast. The enzyme catalyses RNA(n) + a ribonucleoside 5'-triphosphate = RNA(n+1) + diphosphate. Its function is as follows. DNA-dependent RNA polymerase catalyzes the transcription of DNA into RNA using the four ribonucleoside triphosphates as substrates. This Chlorella vulgaris (Green alga) protein is DNA-directed RNA polymerase subunit alpha (rpoA).